Reading from the N-terminus, the 291-residue chain is HTH-type transcriptional regulator CitR (291 aa).

The HTH lysR-type domain occupies 1–58 (MDFKWLHTFVTAAKYENFRKTAETLFLSQPTVTVHIKQLEKEISCKLFERKGRQIQLT). A DNA-binding region (H-T-H motif) is located at residues 18 to 37 (FRKTAETLFLSQPTVTVHIK).

This sequence belongs to the LysR transcriptional regulatory family.

It localises to the cytoplasm. In terms of biological role, negative regulatory protein for the citA gene for citrate synthase I. In Bacillus subtilis (strain 168), this protein is HTH-type transcriptional regulator CitR (citR).